The primary structure comprises 200 residues: MSFSPLIRQLIDALRTLPGVGQKTAQRMALQLLERDRSGGLRLAQALSQAMEGVGHCRQCRTLTEDELCPQCADPRRDDTLLCVVEGPMDVYAVEQTGYRGRYFVLKGHLSPLDGLGPEAIGIPQLLARIEEQGSFSEVILATNPTVEGEATAHYIAQLLTNKGLITSRIAHGVPLGGELELVDGGTLAHSFAGRKPIAL.

A C4-type zinc finger spans residues 57 to 72; the sequence is CRQCRTLTEDELCPQC. In terms of domain architecture, Toprim spans 80–175; sequence TLLCVVEGPM…ITSRIAHGVP (96 aa).

This sequence belongs to the RecR family.

Its function is as follows. May play a role in DNA repair. It seems to be involved in an RecBC-independent recombinational process of DNA repair. It may act with RecF and RecO. This chain is Recombination protein RecR, found in Pseudomonas fluorescens (strain ATCC BAA-477 / NRRL B-23932 / Pf-5).